We begin with the raw amino-acid sequence, 381 residues long: MALQALNIWTRVILTDASRAAVFRGALQSHCFKCRHGAKRFLLSEDVVKLEEFQQKKLSHEMSQLKDYRFDIVNQKLEKNEIILKTELKTLLHSCQSAEDVIVARNVIKRYHENNRTTAFGEFKFGPLFMRLCYELGLEELAATTIKDPALKGFFSDTTSFNITIDMLFNKQLYESGLEVVGEMKKQGVSLSRDTFMLVFAICYKLNTSRSYHICLTLLEEGQTKGNIIPRRAYCFAIALALKQNDLERAQIFYSHIMSTGTRLCQNLRVFILAVKGSMKEAVYVLKTARISETPVLVRKPEFSREVVNVLRRKSAGGVWEERVEQVLTQLEKAGQITEITLDDLLCYTPSRKRRLLELPQKDRQIKQRTRKSLQSGLLLE.

The PPR repeat unit spans residues 157-191 (DTTSFNITIDMLFNKQLYESGLEVVGEMKKQGVSL).

The protein belongs to the PTCD2 family.

It is found in the mitochondrion. In terms of biological role, involved in mitochondrial RNA maturation and mitochondrial respiratory chain function. In Danio rerio (Zebrafish), this protein is Pentatricopeptide repeat-containing protein 2, mitochondrial (ptcd2).